The chain runs to 100 residues: MHSVCSIFLSCSHRVIQAKHPPFPLFHSYFHIPDFLSFVFPFVASPPLAFARRKLDHVPKKFARSIGPFLLIVFLFFNLFPTFFFLPFFPDTTKRPNLAD.

2 helical membrane-spanning segments follow: residues 30–50 and 69–89; these read FHIP…PLAF and FLLI…LPFF.

Its subcellular location is the cytoplasm. The protein resides in the nucleus membrane. This is an uncharacterized protein from Schizosaccharomyces pombe (strain 972 / ATCC 24843) (Fission yeast).